Reading from the N-terminus, the 161-residue chain is Small ribosomal subunit protein uS15 (161 aa).

The segment covering Met-1–Ser-13 has biased composition (basic residues). Positions Met-1–Pro-22 are disordered.

This sequence belongs to the universal ribosomal protein uS15 family. Part of the 30S ribosomal subunit.

This chain is Small ribosomal subunit protein uS15, found in Hyperthermus butylicus (strain DSM 5456 / JCM 9403 / PLM1-5).